The sequence spans 95 residues: Small ribosomal subunit protein uS19 (95 aa).

The tract at residues 76–95 is disordered; sequence PTRTFRGHGGKKADKRGKLK. A compositionally biased stretch (basic residues) spans 80–95; that stretch reads FRGHGGKKADKRGKLK.

Belongs to the universal ribosomal protein uS19 family.

In terms of biological role, protein S19 forms a complex with S13 that binds strongly to the 16S ribosomal RNA. The protein is Small ribosomal subunit protein uS19 of Herpetosiphon aurantiacus (strain ATCC 23779 / DSM 785 / 114-95).